The chain runs to 306 residues: Agmatinase (306 aa).

Residues His-126, Asp-149, His-151, Asp-153, Asp-230, and Asp-232 each coordinate Mn(2+).

The protein belongs to the arginase family. Agmatinase subfamily. Mn(2+) is required as a cofactor.

The catalysed reaction is agmatine + H2O = urea + putrescine. It participates in amine and polyamine biosynthesis; putrescine biosynthesis via agmatine pathway; putrescine from agmatine: step 1/1. Catalyzes the formation of putrescine from agmatine. This chain is Agmatinase, found in Escherichia coli O1:K1 / APEC.